A 386-amino-acid chain; its full sequence is PqqA peptide cyclase (386 aa).

The 220-residue stretch at 9–228 (SKPPLWLLAE…RQYIDQHHLK (220 aa)) folds into the Radical SAM core domain. 3 residues coordinate [4Fe-4S] cluster: Cys-23, Cys-27, and Cys-30.

Belongs to the radical SAM superfamily. PqqE family. Interacts with PqqD. The interaction is necessary for activity of PqqE. [4Fe-4S] cluster is required as a cofactor.

The enzyme catalyses [PQQ precursor protein] + S-adenosyl-L-methionine = E-Y cross-linked-[PQQ precursor protein] + 5'-deoxyadenosine + L-methionine + H(+). It participates in cofactor biosynthesis; pyrroloquinoline quinone biosynthesis. Functionally, catalyzes the cross-linking of a glutamate residue and a tyrosine residue in the PqqA protein as part of the biosynthesis of pyrroloquinoline quinone (PQQ). The protein is PqqA peptide cyclase of Acinetobacter baylyi (strain ATCC 33305 / BD413 / ADP1).